Here is a 264-residue protein sequence, read N- to C-terminus: S-adenosylmethionine decarboxylase proenzyme (264 aa).

The active-site Schiff-base intermediate with substrate; via pyruvic acid is the Ser113. The residue at position 113 (Ser113) is a Pyruvic acid (Ser); by autocatalysis. His118 functions as the Proton acceptor; for processing activity in the catalytic mechanism. The active-site Proton donor; for catalytic activity is the Cys141.

This sequence belongs to the prokaryotic AdoMetDC family. Type 2 subfamily. In terms of assembly, heterooctamer of four alpha and four beta chains arranged as a tetramer of alpha/beta heterodimers. Requires pyruvate as cofactor. Post-translationally, is synthesized initially as an inactive proenzyme. Formation of the active enzyme involves a self-maturation process in which the active site pyruvoyl group is generated from an internal serine residue via an autocatalytic post-translational modification. Two non-identical subunits are generated from the proenzyme in this reaction, and the pyruvate is formed at the N-terminus of the alpha chain, which is derived from the carboxyl end of the proenzyme. The post-translation cleavage follows an unusual pathway, termed non-hydrolytic serinolysis, in which the side chain hydroxyl group of the serine supplies its oxygen atom to form the C-terminus of the beta chain, while the remainder of the serine residue undergoes an oxidative deamination to produce ammonia and the pyruvoyl group blocking the N-terminus of the alpha chain.

It carries out the reaction S-adenosyl-L-methionine + H(+) = S-adenosyl 3-(methylsulfanyl)propylamine + CO2. It participates in amine and polyamine biosynthesis; S-adenosylmethioninamine biosynthesis; S-adenosylmethioninamine from S-adenosyl-L-methionine: step 1/1. Catalyzes the decarboxylation of S-adenosylmethionine to S-adenosylmethioninamine (dcAdoMet), the propylamine donor required for the synthesis of the polyamines spermine and spermidine from the diamine putrescine. The chain is S-adenosylmethionine decarboxylase proenzyme from Pseudomonas aeruginosa (strain ATCC 15692 / DSM 22644 / CIP 104116 / JCM 14847 / LMG 12228 / 1C / PRS 101 / PAO1).